A 119-amino-acid chain; its full sequence is Acidic phospholipase A2 CM-II (119 aa).

Disulfide bonds link Cys-11–Cys-71, Cys-26–Cys-118, Cys-28–Cys-44, Cys-43–Cys-99, Cys-50–Cys-92, Cys-60–Cys-85, and Cys-78–Cys-90. Ca(2+)-binding residues include Phe-27, Gly-29, and Gly-31. His-47 is a catalytic residue. Asp-48 is a Ca(2+) binding site. Residue Asp-93 is part of the active site.

The protein belongs to the phospholipase A2 family. Group I subfamily. D49 sub-subfamily. Ca(2+) is required as a cofactor. In terms of tissue distribution, expressed by the venom gland.

Its subcellular location is the secreted. The catalysed reaction is a 1,2-diacyl-sn-glycero-3-phosphocholine + H2O = a 1-acyl-sn-glycero-3-phosphocholine + a fatty acid + H(+). Functionally, PLA2 catalyzes the calcium-dependent hydrolysis of the 2-acyl groups in 3-sn-phosphoglycerides. The protein is Acidic phospholipase A2 CM-II of Aspidelaps scutatus (Shield-nose snake).